The sequence spans 634 residues: DNA gyrase subunit B (634 aa).

In terms of domain architecture, Toprim spans Arg416–Pro530. Mg(2+) is bound by residues Glu422, Asp495, and Asp497.

This sequence belongs to the type II topoisomerase GyrB family. In terms of assembly, heterotetramer, composed of two GyrA and two GyrB chains. In the heterotetramer, GyrA contains the active site tyrosine that forms a transient covalent intermediate with DNA, while GyrB binds cofactors and catalyzes ATP hydrolysis. Mg(2+) serves as cofactor. The cofactor is Mn(2+). Requires Ca(2+) as cofactor.

The protein resides in the cytoplasm. The enzyme catalyses ATP-dependent breakage, passage and rejoining of double-stranded DNA.. In terms of biological role, a type II topoisomerase that negatively supercoils closed circular double-stranded (ds) DNA in an ATP-dependent manner to modulate DNA topology and maintain chromosomes in an underwound state. Negative supercoiling favors strand separation, and DNA replication, transcription, recombination and repair, all of which involve strand separation. Also able to catalyze the interconversion of other topological isomers of dsDNA rings, including catenanes and knotted rings. Type II topoisomerases break and join 2 DNA strands simultaneously in an ATP-dependent manner. This is DNA gyrase subunit B from Borrelia hermsii.